Here is a 157-residue protein sequence, read N- to C-terminus: Transcription factor HES-2 (157 aa).

A bHLH domain is found at 13 to 70 (LRKNLKPLLEKRRRARINESLSQLKGLVLPLLGAETSRSSKLEKADILEMTVRFLQEQ). One can recognise an Orange domain in the interval 86-119 (YLEGYRACLARLARVLPACSVLEPAVSARLLEHL). The tract at residues 124–157 (VSDDSPSLTLPPAPAPAPSPPVPPPGSSGLWRPW) is disordered. Pro residues predominate over residues 132 to 149 (TLPPAPAPAPSPPVPPPG). The short motif at 154 to 157 (WRPW) is the WRPW motif element.

As to quaternary structure, transcription repression requires formation of a complex with a corepressor protein of the Groucho/TLE family.

It localises to the nucleus. In terms of biological role, transcriptional repressor of genes that require a bHLH protein for their transcription. The sequence is that of Transcription factor HES-2 (Hes2) from Mus musculus (Mouse).